Reading from the N-terminus, the 212-residue chain is Uridine kinase (212 aa).

An ATP-binding site is contributed by 12–19 (GGSGGGKT).

It belongs to the uridine kinase family.

Its subcellular location is the cytoplasm. It carries out the reaction uridine + ATP = UMP + ADP + H(+). The enzyme catalyses cytidine + ATP = CMP + ADP + H(+). Its pathway is pyrimidine metabolism; CTP biosynthesis via salvage pathway; CTP from cytidine: step 1/3. It functions in the pathway pyrimidine metabolism; UMP biosynthesis via salvage pathway; UMP from uridine: step 1/1. This Streptococcus pneumoniae serotype 2 (strain D39 / NCTC 7466) protein is Uridine kinase.